Reading from the N-terminus, the 158-residue chain is UPF0758 protein VC_1786 (158 aa).

Positions 37 to 158 (TFARTENTTE…SVSFAERGWL (122 aa)) constitute an MPN domain. Zn(2+) is bound by residues His-108, His-110, and Asp-121. The JAMM motif signature appears at 108–121 (HNHPSGDPEPSQAD).

It belongs to the UPF0758 family.

The chain is UPF0758 protein VC_1786 from Vibrio cholerae serotype O1 (strain ATCC 39315 / El Tor Inaba N16961).